We begin with the raw amino-acid sequence, 331 residues long: F-box protein At2g26160 (331 aa).

Residues proline 4–proline 52 enclose the F-box domain.

The chain is F-box protein At2g26160 from Arabidopsis thaliana (Mouse-ear cress).